Here is a 698-residue protein sequence, read N- to C-terminus: Polyribonucleotide nucleotidyltransferase (698 aa).

Mg(2+) is bound by residues aspartate 490 and aspartate 496. The region spanning 557-616 (PKVVTMTIKPDKIRDVIGPGGKKINEIIDETGVKLDIEQDGTIFIGAVDQAMINRAREII) is the KH domain. Residues 626 to 694 (GQTYQATVKR…KQGRVNASHR (69 aa)) form the S1 motif domain.

It belongs to the polyribonucleotide nucleotidyltransferase family. It depends on Mg(2+) as a cofactor.

It localises to the cytoplasm. The catalysed reaction is RNA(n+1) + phosphate = RNA(n) + a ribonucleoside 5'-diphosphate. Functionally, involved in mRNA degradation. Catalyzes the phosphorolysis of single-stranded polyribonucleotides processively in the 3'- to 5'-direction. The sequence is that of Polyribonucleotide nucleotidyltransferase from Staphylococcus aureus (strain bovine RF122 / ET3-1).